The primary structure comprises 950 residues: Protocadherin alpha-9 (950 aa).

A signal peptide spans Met1–Gly29. 6 Cadherin domains span residues Gln30–Phe133, Pro134–Phe242, Asp243–Leu350, Thr351–Phe455, Ala456–Leu565, and Gly588–Ser678. Residues Gln30–Asn697 lie on the Extracellular side of the membrane. N-linked (GlcNAc...) asparagine glycosylation is found at Asn254 and Asn265. The N-linked (GlcNAc...) asparagine glycan is linked to Asn548. Residues Val698 to Tyr718 form a helical membrane-spanning segment. Residues Thr719 to Gln950 are Cytoplasmic-facing. Residues Pro734 to Pro737 form a PXXP 1 repeat. Positions Pro734–Pro894 are 5 X 4 AA repeats of P-X-X-P. Disordered regions lie at residues Met770 to Tyr808, Ile827 to Pro856, and Tyr871 to Gln950. Residues Pro789–Lys798 show a composition bias toward polar residues. PXXP repeat units follow at residues Pro799 to Pro802, Pro832 to Pro835, Pro873 to Pro876, and Pro891 to Pro894. A compositionally biased stretch (basic and acidic residues) spans Asp909 to Lys923.

The protein localises to the cell membrane. Potential calcium-dependent cell-adhesion protein. May be involved in the establishment and maintenance of specific neuronal connections in the brain. This chain is Protocadherin alpha-9 (PCDHA9), found in Homo sapiens (Human).